A 234-amino-acid polypeptide reads, in one-letter code: 7-carboxy-7-deazaguanine synthase (234 aa).

The interval 1–28 is disordered; that stretch reads MPLNCDTKTAGEISSSIPSGSGSHQPAA. Over residues 13 to 23 the composition is skewed to low complexity; that stretch reads ISSSIPSGSGS. Residues 42 to 44 and R57 each bind substrate; that span reads LQG. Residues 48-234 enclose the Radical SAM core domain; sequence TSGYPTIFIR…LQLHKFIGLP (187 aa). The [4Fe-4S] cluster site is built by C61, C65, and C68. Residue T70 participates in Mg(2+) binding. A substrate-binding site is contributed by T100. G102 provides a ligand contact to S-adenosyl-L-methionine. Residue P234 coordinates substrate.

This sequence belongs to the radical SAM superfamily. 7-carboxy-7-deazaguanine synthase family. Homodimer. [4Fe-4S] cluster serves as cofactor. It depends on S-adenosyl-L-methionine as a cofactor. The cofactor is Mg(2+).

The catalysed reaction is 6-carboxy-5,6,7,8-tetrahydropterin + H(+) = 7-carboxy-7-deazaguanine + NH4(+). Its pathway is purine metabolism; 7-cyano-7-deazaguanine biosynthesis. Its function is as follows. Catalyzes the complex heterocyclic radical-mediated conversion of 6-carboxy-5,6,7,8-tetrahydropterin (CPH4) to 7-carboxy-7-deazaguanine (CDG), a step common to the biosynthetic pathways of all 7-deazapurine-containing compounds. This chain is 7-carboxy-7-deazaguanine synthase, found in Methanospirillum hungatei JF-1 (strain ATCC 27890 / DSM 864 / NBRC 100397 / JF-1).